We begin with the raw amino-acid sequence, 699 residues long: Pollen-specific leucine-rich repeat extensin-like protein 4 (699 aa).

Positions 1–39 (MPFYKQPWVFSKVFVLAMAKPPSFGCCFFLLFFSFLSSS) are cleaved as a signal peptide. The N-linked (GlcNAc...) asparagine glycan is linked to Asn106. LRR repeat units lie at residues 133-157 (VTVV…LGLM), 158-180 (TDVA…SFEK), 182-205 (KLMH…VLSW), 206-229 (PDVK…LFKK), 231-251 (LDAI…SLGE), 253-275 (PASV…IGNM), 276-299 (KNLN…IGKL), 301-323 (NVTV…FVGL), and 324-347 (TSVE…ICQL). N-linked (GlcNAc...) asparagine glycosylation is present at Asn301. N-linked (GlcNAc...) asparagine glycosylation is present at Asn352. Residues 411 to 699 (KCAGGSSTPS…SPPPPMFAGY (289 aa)) are disordered. 4 stretches are compositionally biased toward pro residues: residues 421–466 (KPSP…PVPT), 482–504 (KPSP…PQPD), 518–659 (PPPA…PPAP), and 690–699 (SPPPPMFAGY). Residues 517–699 (SPPPAPVNSP…SPPPPMFAGY (183 aa)) are contains the Ser-Pro(4) repeats.

In terms of processing, hydroxylated on proline residues in the S-P-P-P-P repeat. Post-translationally, O-glycosylated on hydroxyprolines. As to expression, expressed in flowers, stamen, pollen, and pollinated carpels.

The protein resides in the secreted. Its subcellular location is the cell wall. Its function is as follows. Modulates cell morphogenesis by regulating cell wall formation and assembly, and/or growth polarization. The chain is Pollen-specific leucine-rich repeat extensin-like protein 4 (PEX4) from Arabidopsis thaliana (Mouse-ear cress).